The primary structure comprises 366 residues: tRNA/tmRNA (uracil-C(5))-methyltransferase (366 aa).

Positions 190, 218, 223, 239, and 299 each coordinate S-adenosyl-L-methionine. Cys324 serves as the catalytic Nucleophile. Catalysis depends on Glu358, which acts as the Proton acceptor.

It belongs to the class I-like SAM-binding methyltransferase superfamily. RNA M5U methyltransferase family. TrmA subfamily.

The catalysed reaction is uridine(54) in tRNA + S-adenosyl-L-methionine = 5-methyluridine(54) in tRNA + S-adenosyl-L-homocysteine + H(+). It carries out the reaction uridine(341) in tmRNA + S-adenosyl-L-methionine = 5-methyluridine(341) in tmRNA + S-adenosyl-L-homocysteine + H(+). Functionally, dual-specificity methyltransferase that catalyzes the formation of 5-methyluridine at position 54 (m5U54) in all tRNAs, and that of position 341 (m5U341) in tmRNA (transfer-mRNA). The protein is tRNA/tmRNA (uracil-C(5))-methyltransferase of Escherichia coli O7:K1 (strain IAI39 / ExPEC).